The chain runs to 262 residues: 2-keto-4-pentenoate hydratase (262 aa).

It belongs to the hydratase/decarboxylase family. MhpD subfamily. The cofactor is a divalent metal cation.

The catalysed reaction is (S)-4-hydroxy-2-oxopentanoate = (2Z)-2-hydroxypenta-2,4-dienoate + H2O. It functions in the pathway aromatic compound metabolism; 3-phenylpropanoate degradation. Catalyzes the conversion of 2-hydroxypentadienoic acid (enolic form of 2-oxopent-4-enoate) to 4-hydroxy-2-ketopentanoic acid. This is 2-keto-4-pentenoate hydratase from Paraburkholderia phymatum (strain DSM 17167 / CIP 108236 / LMG 21445 / STM815) (Burkholderia phymatum).